A 497-amino-acid chain; its full sequence is Probable cytosol aminopeptidase (497 aa).

Mn(2+)-binding residues include K263 and D268. Residue K275 is part of the active site. Mn(2+) contacts are provided by D286, D345, and E347. The active site involves R349.

It belongs to the peptidase M17 family. Mn(2+) is required as a cofactor.

The protein resides in the cytoplasm. The enzyme catalyses Release of an N-terminal amino acid, Xaa-|-Yaa-, in which Xaa is preferably Leu, but may be other amino acids including Pro although not Arg or Lys, and Yaa may be Pro. Amino acid amides and methyl esters are also readily hydrolyzed, but rates on arylamides are exceedingly low.. It carries out the reaction Release of an N-terminal amino acid, preferentially leucine, but not glutamic or aspartic acids.. Its function is as follows. Presumably involved in the processing and regular turnover of intracellular proteins. Catalyzes the removal of unsubstituted N-terminal amino acids from various peptides. The polypeptide is Probable cytosol aminopeptidase (Methylorubrum populi (strain ATCC BAA-705 / NCIMB 13946 / BJ001) (Methylobacterium populi)).